The chain runs to 165 residues: Shikimate kinase (165 aa).

Residue 11-16 (GAGKTT) participates in ATP binding. Thr-15 serves as a coordination point for Mg(2+). Substrate is bound by residues Asp-33, Arg-57, and Gly-78. Position 116 (Arg-116) interacts with ATP. Position 134 (Arg-134) interacts with substrate.

The protein belongs to the shikimate kinase family. In terms of assembly, monomer. The cofactor is Mg(2+).

The protein localises to the cytoplasm. The catalysed reaction is shikimate + ATP = 3-phosphoshikimate + ADP + H(+). The protein operates within metabolic intermediate biosynthesis; chorismate biosynthesis; chorismate from D-erythrose 4-phosphate and phosphoenolpyruvate: step 5/7. Functionally, catalyzes the specific phosphorylation of the 3-hydroxyl group of shikimic acid using ATP as a cosubstrate. The sequence is that of Shikimate kinase from Bacillus mycoides (strain KBAB4) (Bacillus weihenstephanensis).